A 778-amino-acid polypeptide reads, in one-letter code: uncharacterized protein (778 aa).

Positions 1–92 (MSFVIAVPEA…GARSYVVAEA (92 aa)) constitute a PE domain. 3 disordered regions span residues 125–163 (ADGT…AGLI), 372–510 (TGLA…GDAF), and 718–778 (QGGL…GADG). 3 stretches are compositionally biased toward gly residues: residues 402–429 (NQTG…GGLG), 436–510 (DGTG…GDAF), and 718–763 (QGGL…GSSG).

This sequence belongs to the mycobacterial PE family. PGRS subfamily.

This is an uncharacterized protein from Mycobacterium bovis (strain ATCC BAA-935 / AF2122/97).